The chain runs to 511 residues: Protoheme IX farnesyltransferase, mitochondrial (511 aa).

Residues 1–23 (MSSSTESLPGTLRRTLTTSRAPA) constitute a mitochondrion transit peptide. Disordered regions lie at residues 1 to 27 (MSSSTESLPGTLRRTLTTSRAPAATSS) and 50 to 136 (HDSA…LAPD). Composition is skewed to low complexity over residues 52–79 (SASSQRSTTVASTTSTTADAADGSSSTT), 104–115 (RKAAAAAAAAAA), and 126–136 (PDAPTADLAPD). The next 8 membrane-spanning stretches (helical) occupy residues 168-188 (LTVLVVLSAMVPYALYPVPSF), 197-217 (SLAPSLSPLTLLFLTTGTTLC), 253-273 (AAVLFAVGCGLAGTLALYFGV), 275-295 (PTVSFLGAANIALYAGAYTPL), 303-323 (TWVGAIVGGIPPLMGWAAAAG), 344-364 (LGGWLFAGLLFAWQFPHFMPL), 398-418 (AFIPLCVGLSATGVTEWSFAV), and 444-464 (ARGLFWASVWHLPVIMVLALA).

Belongs to the UbiA prenyltransferase family.

Its subcellular location is the mitochondrion membrane. Converts protoheme IX and farnesyl diphosphate to heme O. The protein is Protoheme IX farnesyltransferase, mitochondrial (pft-1) of Neurospora crassa (strain ATCC 24698 / 74-OR23-1A / CBS 708.71 / DSM 1257 / FGSC 987).